Consider the following 647-residue polypeptide: Probable inactive receptor kinase RLK902 (647 aa).

Positions 1–29 are cleaved as a signal peptide; it reads MRLFFTPSMSNLSIFFSILLLSLPLPSIG. 5 LRR repeats span residues 69–93, 94–118, 119–142, 144–165, and 166–192; these read GGRV…IFGN, LTQL…LGSC, SDLR…LFSL, NLVR…GFKN, and LTRL…SLDQ. Residues 268–288 form a helical membrane-spanning segment; sequence GIVIGCVVGLSLIVMILMVLF. Residues 365–639 enclose the Protein kinase domain; sequence RASAEVLGKG…EVVRRIQELR (275 aa). Ser-367 carries the post-translational modification Phosphoserine. ATP is bound at residue 371–379; sequence LGKGTFGTA. The residue at position 388 (Thr-388) is a Phosphothreonine. ATP is bound at residue Lys-393. Position 444 is a phosphoserine (Ser-444). Thr-520 is modified (phosphothreonine). Ser-540 is modified (phosphoserine). Thr-618 bears the Phosphothreonine mark.

Belongs to the protein kinase superfamily. Ser/Thr protein kinase family. In terms of assembly, interacts with At3g17950, At3g27210 and At5g05190. In terms of processing, autophosphorylation. In terms of tissue distribution, expressed in root tips, lateral root primordia, stipules, and floral organ abscission zones.

It is found in the cell membrane. This chain is Probable inactive receptor kinase RLK902 (RLK902), found in Arabidopsis thaliana (Mouse-ear cress).